The primary structure comprises 51 residues: Small ribosomal subunit protein uS13 (51 aa).

Belongs to the universal ribosomal protein uS13 family. As to quaternary structure, part of the 30S ribosomal subunit. Forms a loose heterodimer with protein S19. Forms two bridges to the 50S subunit in the 70S ribosome.

Functionally, located at the top of the head of the 30S subunit, it contacts several helices of the 16S rRNA. In the 70S ribosome it contacts the 23S rRNA (bridge B1a) and protein L5 of the 50S subunit (bridge B1b), connecting the 2 subunits; these bridges are implicated in subunit movement. Contacts the tRNAs in the A and P-sites. The chain is Small ribosomal subunit protein uS13 (rpsM) from Lactococcus lactis subsp. cremoris (Streptococcus cremoris).